The following is a 225-amino-acid chain: UPF0758 protein Ssed_0385 (225 aa).

An MPN domain is found at 102-224; the sequence is ILSDPDLTRD…IVSFAERGWI (123 aa). Histidine 173, histidine 175, and aspartate 186 together coordinate Zn(2+). The JAMM motif signature appears at 173–186; that stretch reads HNHPSGVAEPSLAD.

Belongs to the UPF0758 family.

This chain is UPF0758 protein Ssed_0385, found in Shewanella sediminis (strain HAW-EB3).